A 681-amino-acid polypeptide reads, in one-letter code: PAB-dependent poly(A)-specific ribonuclease subunit pan3-like (681 aa).

The C3H1-type zinc-finger motif lies at 9–38 (FSTNIPCRNEQLYGRCPYIDKGCFFQHKNQ). Disordered stretches follow at residues 38-58 (QDNA…PQNS) and 82-123 (SSAS…TVSL). Low complexity predominate over residues 41–50 (APASSKPPSA). Residues 96-106 (KSYSSALSSGK) are compositionally biased toward polar residues. A Phosphoserine modification is found at serine 165.

It belongs to the protein kinase superfamily. PAN3 family.

The protein localises to the cytoplasm. Functionally, regulatory subunit of the poly(A)-nuclease (PAN) deadenylation complex. The chain is PAB-dependent poly(A)-specific ribonuclease subunit pan3-like from Schizosaccharomyces pombe (strain 972 / ATCC 24843) (Fission yeast).